The sequence spans 155 residues: Putative pre-16S rRNA nuclease (155 aa).

Positions 136-155 (DAERATSRPPGHPVEPRIGP) are disordered.

This sequence belongs to the YqgF nuclease family.

The protein localises to the cytoplasm. Its function is as follows. Could be a nuclease involved in processing of the 5'-end of pre-16S rRNA. The polypeptide is Putative pre-16S rRNA nuclease (Leifsonia xyli subsp. xyli (strain CTCB07)).